The primary structure comprises 89 residues: Small ribosomal subunit protein uS17 (89 aa).

The protein belongs to the universal ribosomal protein uS17 family. In terms of assembly, part of the 30S ribosomal subunit.

One of the primary rRNA binding proteins, it binds specifically to the 5'-end of 16S ribosomal RNA. The sequence is that of Small ribosomal subunit protein uS17 from Xylella fastidiosa (strain Temecula1 / ATCC 700964).